The following is a 499-amino-acid chain: Leukocyte immunoglobulin-like receptor subfamily A member 4 (499 aa).

Positions 1-23 (MTLILTSLLFFGLSLGPRTRVQA) are cleaved as a signal peptide. 4 consecutive Ig-like C2-type domains span residues 24-118 (ENLL…LVVT), 123-213 (PTLS…SDPL), 224-313 (PSLL…DPLD), and 324-413 (PSLS…SEPL). The Extracellular portion of the chain corresponds to 24–446 (ENLLKPILWA…PHLQDYTVEN (423 aa)). Cysteine 49 and cysteine 98 form a disulfide bridge. Asparagine 138 carries an N-linked (GlcNAc...) asparagine glycan. A disulfide bridge links cysteine 143 with cysteine 195. Residues asparagine 239, asparagine 279, and asparagine 300 are each glycosylated (N-linked (GlcNAc...) asparagine). Cysteine 244 and cysteine 295 are disulfide-bonded. The cysteines at positions 344 and 395 are disulfide-linked. Tyrosine 404 carries the post-translational modification 3'-nitrotyrosine. Residues 447 to 467 (LIRMGVAGLVLLFLGILLFEA) traverse the membrane as a helical segment. Residues 468–499 (QHSQRSPPRCSQEANSRKDNAPFRVVEPWEQI) lie on the Cytoplasmic side of the membrane.

In terms of assembly, interacts with FCER1G; this stabilizes the expression of both proteins at the cell membrane. Interacts with BST2; leads to activation of LILRA4-mediated signaling and down-regulation of the innate immune response to viral pathogens. Detected on plasmacytoid dendritic cells (at protein level). Detected on plasmacytoid dendritic cells, but not on monocytes or B cells.

The protein resides in the cell membrane. Functions coreceptor to limit the innate immune responses to viral infections; signaling occurs via FCER1G. Down-regulates the production of IFNA1, IFNA2, IFNA4, IFNB1 and TNF by plasmacytoid dendritic cells that have been exposed to influenza virus or cytidine-phosphate-guanosine (CpG) dinucleotides, indicating it functions as a negative regulator of TLR7 and TLR9 signaling cascades. Down-regulates interferon production in response to interaction with BST2 on HIV-1 infected cells. Activates a signaling cascade in complex with FCER1G that results in phosphorylation of Src family and Syk kinases and thereby triggers mobilization of intracellular Ca(2+). Does not interfere with the differentiation of plasmacytoid dendritic cells into antigen-presenting cells. The chain is Leukocyte immunoglobulin-like receptor subfamily A member 4 from Homo sapiens (Human).